The sequence spans 195 residues: Recombination protein RecR (195 aa).

A C4-type zinc finger spans residues 54-69; sequence CTICGSYTEDEICSIC. A Toprim domain is found at 77–172; the sequence is ATICVVGFPQ…NITRLASGLP (96 aa).

Belongs to the RecR family.

Functionally, may play a role in DNA repair. It seems to be involved in an RecBC-independent recombinational process of DNA repair. It may act with RecF and RecO. The chain is Recombination protein RecR from Treponema denticola (strain ATCC 35405 / DSM 14222 / CIP 103919 / JCM 8153 / KCTC 15104).